Consider the following 497-residue polypeptide: Glycerol kinase (497 aa).

Thr12 contributes to the ADP binding site. ATP contacts are provided by Thr12, Thr13, and Ser14. A sn-glycerol 3-phosphate-binding site is contributed by Thr12. Arg16 is an ADP binding site. Positions 82, 83, 134, and 243 each coordinate sn-glycerol 3-phosphate. Glycerol is bound by residues Arg82, Glu83, Tyr134, Asp243, and Gln244. Thr265 and Gly308 together coordinate ADP. Positions 265, 308, 312, and 409 each coordinate ATP. Positions 409 and 413 each coordinate ADP.

This sequence belongs to the FGGY kinase family. Homotetramer and homodimer (in equilibrium).

The catalysed reaction is glycerol + ATP = sn-glycerol 3-phosphate + ADP + H(+). It participates in polyol metabolism; glycerol degradation via glycerol kinase pathway; sn-glycerol 3-phosphate from glycerol: step 1/1. Activated by phosphorylation and inhibited by fructose 1,6-bisphosphate (FBP). In terms of biological role, key enzyme in the regulation of glycerol uptake and metabolism. Catalyzes the phosphorylation of glycerol to yield sn-glycerol 3-phosphate. This is Glycerol kinase from Thermoanaerobacter pseudethanolicus (strain ATCC 33223 / 39E) (Clostridium thermohydrosulfuricum).